The primary structure comprises 342 residues: Aquaporin-8 (342 aa).

3 helical membrane-spanning segments follow: residues 55–75, 98–118, and 126–146; these read FLAVFVLMVFIEGSAATAIFT, VAGGVSGAFLNPAVALAFAVL, and CIFYMISQYLAAFVASCTMFA. Residues 108–110 carry the NPA 1 motif; that stretch reads NPA. Asn-166 carries N-linked (GlcNAc...) asparagine glycosylation. The next 2 membrane-spanning stretches (helical) occupy residues 184 to 204 and 215 to 235; these read TAFADQVFCTAILLIVVLAMC and FLPIAIGLLIITISCTLSYNA. The short motif at 240–242 is the NPA 2 element; it reads NPS. A helical transmembrane segment spans residues 266-286; that stretch reads YTWFFVPVLGSHCGAIIGGAI. The span at 302–327 shows a compositional bias: polar residues; the sequence is TNSVSSMSYNEDNSTLTKRKQVSNIV. The segment at 302–342 is disordered; it reads TNSVSSMSYNEDNSTLTKRKQVSNIVHDSKGAKGSSTAPVN. A glycan (N-linked (GlcNAc...) asparagine) is linked at Asn-314.

It belongs to the MIP/aquaporin (TC 1.A.8) family.

The protein localises to the cell membrane. Aquaglyceroporin that may modulate the water content and osmolytes during anhydrobiosis. The polypeptide is Aquaporin-8 (Milnesium tardigradum (Water bear)).